The sequence spans 557 residues: Probable tRNA-splicing endonuclease subunit tsp-5 (557 aa).

Disordered regions lie at residues 1–36 (MPLDDDLEDNPSLVPPPSTTTTSSNATGDAATMMDE), 131–152 (KLTKRGKEGAGEDDEEEKDRKL), 225–252 (SVPAAAAATTSAKGEGEQRTEEDEEDDD), 370–403 (PSSTSSSASPTADNQPQKPQSPESDESDSGSDSP), and 514–557 (SGGP…GRGN). Over residues 131 to 140 (KLTKRGKEGA) the composition is skewed to basic and acidic residues. Positions 370 to 381 (PSSTSSSASPTA) are enriched in low complexity. Gly residues-rich tracts occupy residues 517–527 (PRRGGGGGGKK) and 538–549 (GRGGGRGGGRGG).

It belongs to the SEN54 family. In terms of assembly, tRNA splicing endonuclease is a heterotetramer composed of tsp-2/sen2, tsp-1/sen15, tsp-4/sen34 and tsp-5/sen54. Interacts directly with tsp-2/sen2.

In terms of biological role, non-catalytic subunit of the tRNA-splicing endonuclease complex, a complex responsible for identification and cleavage of the splice sites in pre-tRNA. It cleaves pre-tRNA at the 5' and 3' splice sites to release the intron. The products are an intron and two tRNA half-molecules bearing 2',3' cyclic phosphate and 5'-OH termini. There are no conserved sequences at the splice sites, but the intron is invariably located at the same site in the gene, placing the splice sites an invariant distance from the constant structural features of the tRNA body. May be required to embody the molecular ruler of the complex. In Neurospora crassa (strain ATCC 24698 / 74-OR23-1A / CBS 708.71 / DSM 1257 / FGSC 987), this protein is Probable tRNA-splicing endonuclease subunit tsp-5 (tsp-5).